A 95-amino-acid polypeptide reads, in one-letter code: Large ribosomal subunit protein bL25 (95 aa).

Belongs to the bacterial ribosomal protein bL25 family. In terms of assembly, part of the 50S ribosomal subunit; part of the 5S rRNA/L5/L18/L25 subcomplex. Contacts the 5S rRNA. Binds to the 5S rRNA independently of L5 and L18.

In terms of biological role, this is one of the proteins that binds to the 5S RNA in the ribosome where it forms part of the central protuberance. This is Large ribosomal subunit protein bL25 from Shewanella sp. (strain ANA-3).